The following is a 194-amino-acid chain: Cyclin-dependent kinase inhibitor 4 (194 aa).

Basic and acidic residues predominate over residues 49–58 (LELRSRRLEK). Disordered regions lie at residues 49-70 (LELR…PRRR) and 107-139 (TRET…SHCK).

Belongs to the CDI family. ICK/KRP subfamily.

The chain is Cyclin-dependent kinase inhibitor 4 (KRP4) from Oryza sativa subsp. japonica (Rice).